A 259-amino-acid chain; its full sequence is Flap endonuclease Xni (259 aa).

D109 is a binding site for Mg(2+). Residues 165 to 255 (VKPQQLSDYW…FNLQDLRFTA (91 aa)) enclose the 5'-3' exonuclease domain. The K(+) site is built by L176, I187, and I190. The segment at 189-194 (GIGPKA) is interaction with DNA.

The protein belongs to the Xni family. Mg(2+) serves as cofactor. The cofactor is K(+).

Its function is as follows. Has flap endonuclease activity. During DNA replication, flap endonucleases cleave the 5'-overhanging flap structure that is generated by displacement synthesis when DNA polymerase encounters the 5'-end of a downstream Okazaki fragment. The sequence is that of Flap endonuclease Xni from Vibrio vulnificus (strain YJ016).